Here is a 282-residue protein sequence, read N- to C-terminus: Probable aquaporin PIP2-6 (282 aa).

2 helical membrane passes run Ala-39–Ile-59 and Leu-76–Ile-96. The short motif at Asn-102–Ala-104 is the NPA 1 element. A run of 3 helical transmembrane segments spans residues Val-121–Ile-141, Gly-163–Ala-183, and Val-197–Ile-217. The NPA 2 signature appears at Asn-223–Ala-225. The helical transmembrane segment at Ile-245–Leu-265 threads the bilayer.

This sequence belongs to the MIP/aquaporin (TC 1.A.8) family. PIP (TC 1.A.8.11) subfamily. Expressed in roots and leaves.

The protein resides in the cell membrane. Aquaporins facilitate the transport of water and small neutral solutes across cell membranes. This is Probable aquaporin PIP2-6 (PIP2-6) from Oryza sativa subsp. japonica (Rice).